A 280-amino-acid chain; its full sequence is Bicarbonate transport system permease protein CmpB (280 aa).

7 helical membrane passes run 32-52, 99-119, 126-146, 153-173, 198-218, 219-239, and 251-271; these read PIFG…AGLI, YSLA…QPLL, IFQF…LVAL, AIFV…TEGV, ILIP…IGLA, WLAI…GFFI, and IILA…GIAY. The region spanning 88-266 is the ABC transmembrane type-1 domain; sequence TLASLGRVAQ…YIGAVGLLLD (179 aa).

This sequence belongs to the binding-protein-dependent transport system permease family. In terms of assembly, the complex is composed of two ATP-binding proteins (CmpC and CmpD), a transmembrane protein (CmpB) and a solute-binding protein (CmpA).

The protein resides in the cell inner membrane. Functionally, part of the ABC transporter complex CmpABCD involved in bicarbonate transport. Probably responsible for the translocation of the substrate across the membrane. This is Bicarbonate transport system permease protein CmpB (cmpB) from Synechocystis sp. (strain ATCC 27184 / PCC 6803 / Kazusa).